We begin with the raw amino-acid sequence, 284 residues long: Ribosomal RNA small subunit methyltransferase A (284 aa).

S-adenosyl-L-methionine contacts are provided by His12, Leu14, Gly47, Glu68, Asp93, and Asn118.

It belongs to the class I-like SAM-binding methyltransferase superfamily. rRNA adenine N(6)-methyltransferase family. RsmA subfamily.

The protein localises to the cytoplasm. The enzyme catalyses adenosine(1518)/adenosine(1519) in 16S rRNA + 4 S-adenosyl-L-methionine = N(6)-dimethyladenosine(1518)/N(6)-dimethyladenosine(1519) in 16S rRNA + 4 S-adenosyl-L-homocysteine + 4 H(+). Specifically dimethylates two adjacent adenosines (A1518 and A1519) in the loop of a conserved hairpin near the 3'-end of 16S rRNA in the 30S particle. May play a critical role in biogenesis of 30S subunits. This is Ribosomal RNA small subunit methyltransferase A from Synechocystis sp. (strain ATCC 27184 / PCC 6803 / Kazusa).